The following is a 71-amino-acid chain: Brevinin-1SN2 (71 aa).

Positions 1–22 (MFTMKKSLLLIFFLGTINLSLC) are cleaved as a signal peptide. The propeptide at 23 to 45 (EEERNADEDEKRDGDDESDVEVQ) is removed in mature form. Cys65 and Cys71 are disulfide-bonded.

The protein belongs to the frog skin active peptide (FSAP) family. Brevinin subfamily. In terms of tissue distribution, expressed by the skin glands.

The protein localises to the secreted. Antimicrobial peptide. Active against a variety of Gram-negative and Gram-positive bacterial strains. Active against fungus C.glabrata 090902 and C.albicans ATCC 10231. Shows hemolytic activity against human erythrocytes. The polypeptide is Brevinin-1SN2 (Sylvirana spinulosa (Fine-spined frog)).